Here is a 225-residue protein sequence, read N- to C-terminus: Ribosomal RNA small subunit methyltransferase G (225 aa).

S-adenosyl-L-methionine is bound by residues Gly-69, 119–120 (AE), and Arg-136.

The protein belongs to the methyltransferase superfamily. RNA methyltransferase RsmG family.

The protein resides in the cytoplasm. Specifically methylates the N7 position of a guanine in 16S rRNA. In Pseudothermotoga lettingae (strain ATCC BAA-301 / DSM 14385 / NBRC 107922 / TMO) (Thermotoga lettingae), this protein is Ribosomal RNA small subunit methyltransferase G.